The primary structure comprises 364 residues: Nucleoporin SEH1 (364 aa).

WD repeat units follow at residues 10 to 49 (DHKD…EWNC), 55 to 96 (THSG…SNDK), 111 to 152 (DSRT…NLSQ), 160 to 210 (SCKL…RKYA), 217 to 258 (TVTD…KESS), and 275 to 314 (GHNS…NWKC). A disordered region spans residues 326-364 (NGAAGQAGTPGAAGTPGGPASQNALQAVAGRKKAQLMPG). Over residues 327-338 (GAAGQAGTPGAA) the composition is skewed to low complexity. A compositionally biased stretch (basic residues) spans 355-364 (GRKKAQLMPG).

The protein belongs to the WD repeat SEC13 family. In terms of assembly, component of the Nup107-160 subcomplex of the nuclear pore complex (NPC). The Nup107-160 subcomplex includes NUP160, NUP133, NUP107, NUP98, NUP85, NUP43, NUP37, SEH1 and SEC13. Component of the GATOR2 subcomplex, composed of MIOS, SEC13, SEH1L, WDR24 and WDR59. The GATOR2 complex interacts with CASTOR1 and CASTOR2; the interaction is negatively regulated by arginine. The GATOR2 complex interacts with SESN1, SESN2 and SESN3; the interaction is negatively regulated by amino acids.

The protein localises to the chromosome. The protein resides in the centromere. It localises to the kinetochore. Its subcellular location is the nucleus. It is found in the nuclear pore complex. The protein localises to the lysosome membrane. With respect to regulation, the GATOR2 complex is negatively regulated by the upstream amino acid sensors CASTOR1 and SESN2, which sequester the GATOR2 complex in absence of amino acids. In the presence of abundant amino acids, GATOR2 is released from CASTOR1 and SESN2 and activated. Component of the Nup107-160 subcomplex of the nuclear pore complex (NPC). The Nup107-160 subcomplex is required for the assembly of a functional NPC. The Nup107-160 subcomplex is also required for normal kinetochore microtubule attachment, mitotic progression and chromosome segregation. This subunit plays a role in recruitment of the Nup107-160 subcomplex to the kinetochore. Its function is as follows. As a component of the GATOR2 complex, functions as an activator of the amino acid-sensing branch of the mTORC1 signaling pathway. The GATOR2 complex indirectly activates mTORC1 through the inhibition of the GATOR1 subcomplex. GATOR2 probably acts as an E3 ubiquitin-protein ligase toward GATOR1. In the presence of abundant amino acids, the GATOR2 complex mediates ubiquitination of the NPRL2 core component of the GATOR1 complex, leading to GATOR1 inactivation. In the absence of amino acids, GATOR2 is inhibited, activating the GATOR1 complex. This is Nucleoporin SEH1 (seh1l) from Osmerus mordax (Rainbow smelt).